Consider the following 366-residue polypeptide: Zinc-regulated GTPase metalloprotein activator 1 (366 aa).

The psi-PxLVp motif signature appears at 5 to 12; the sequence is DECPELVP. 31 to 38 contributes to the GTP binding site; sequence GYLGAGKT. Zn(2+) is bound by residues Cys89, Cys91, and Cys92. A CXCC motif motif is present at residues 89-92; the sequence is CLCC. Residues 92–96 and 185–188 contribute to the GTP site; these read CSVKD and NKTD. A CobW C-terminal domain is found at 258–357; sequence TITFEVPGSV…GEILKKEFIS (100 aa).

The protein belongs to the SIMIBI class G3E GTPase family. ZNG1 subfamily.

Its subcellular location is the nucleus. It catalyses the reaction GTP + H2O = GDP + phosphate + H(+). In terms of biological role, zinc chaperone that directly transfers zinc cofactor to target metalloproteins, thereby activating them. Catalyzes zinc insertion into the active site of methionine aminopeptidase METAP1, which function to cleave the initiator methionine from polypeptides during or after protein translation. Mechanistically, the N-terminal psi-PxLVp motif binds to the C6H2-type zinc finger of inactive form of METAP1. After formation of the docked complex, zinc is transferred from the CXCC motif in the GTPase domain of ZNG1 to the zinc binding site in the peptidase domain of METAP1 in a process requiring GTP hydrolysis. GTP/GDP exchange is required for release of active METAP1. The protein is Zinc-regulated GTPase metalloprotein activator 1 of Danio rerio (Zebrafish).